Reading from the N-terminus, the 185-residue chain is Peptidyl-tRNA hydrolase (185 aa).

Residue Y14 coordinates tRNA. H19 acts as the Proton acceptor in catalysis. Residues F64, N66, and N112 each coordinate tRNA.

The protein belongs to the PTH family. Monomer.

It is found in the cytoplasm. It carries out the reaction an N-acyl-L-alpha-aminoacyl-tRNA + H2O = an N-acyl-L-amino acid + a tRNA + H(+). In terms of biological role, hydrolyzes ribosome-free peptidyl-tRNAs (with 1 or more amino acids incorporated), which drop off the ribosome during protein synthesis, or as a result of ribosome stalling. Catalyzes the release of premature peptidyl moieties from peptidyl-tRNA molecules trapped in stalled 50S ribosomal subunits, and thus maintains levels of free tRNAs and 50S ribosomes. In Caldanaerobacter subterraneus subsp. tengcongensis (strain DSM 15242 / JCM 11007 / NBRC 100824 / MB4) (Thermoanaerobacter tengcongensis), this protein is Peptidyl-tRNA hydrolase.